Here is a 104-residue protein sequence, read N- to C-terminus: Large ribosomal subunit protein bL21 (104 aa).

This sequence belongs to the bacterial ribosomal protein bL21 family. Part of the 50S ribosomal subunit. Contacts protein L20.

Its function is as follows. This protein binds to 23S rRNA in the presence of protein L20. This chain is Large ribosomal subunit protein bL21, found in Leptospira interrogans serogroup Icterohaemorrhagiae serovar copenhageni (strain Fiocruz L1-130).